The sequence spans 298 residues: Tyrosine recombinase XerC (298 aa).

The region spanning 2–88 (TDLHTDVERY…ALRSFFDWLV (87 aa)) is the Core-binding (CB) domain. The region spanning 109–288 (HLPKNIDVDD…DFQHLASVYD (180 aa)) is the Tyr recombinase domain. Active-site residues include arginine 148, lysine 172, histidine 240, arginine 243, and histidine 266. Tyrosine 275 acts as the O-(3'-phospho-DNA)-tyrosine intermediate in catalysis.

The protein belongs to the 'phage' integrase family. XerC subfamily. In terms of assembly, forms a cyclic heterotetrameric complex composed of two molecules of XerC and two molecules of XerD, in which XerC interacts with XerD via its C-terminal region, XerD interacts with XerC via its C-terminal region and so on.

The protein localises to the cytoplasm. Its activity is regulated as follows. FtsK may regulate the catalytic switch between XerC and XerD in the heterotetrameric complex during the two steps of the recombination process. Site-specific tyrosine recombinase, which acts by catalyzing the cutting and rejoining of the recombining DNA molecules. Binds cooperatively to specific DNA consensus sequences that are separated from XerD binding sites by a short central region, forming the heterotetrameric XerC-XerD complex that recombines DNA substrates. The complex is essential to convert dimers of the bacterial chromosome into monomers to permit their segregation at cell division. It also contributes to the segregational stability of plasmids. In the complex XerC specifically exchanges the top DNA strands. In Escherichia coli O139:H28 (strain E24377A / ETEC), this protein is Tyrosine recombinase XerC.